A 260-amino-acid polypeptide reads, in one-letter code: Methylesterase 7 (260 aa).

S84 (acyl-ester intermediate) is an active-site residue. Residues D210 and H238 each act as charge relay system in the active site.

The protein belongs to the AB hydrolase superfamily. Methylesterase family.

The enzyme catalyses methyl (indol-3-yl)acetate + H2O = (indol-3-yl)acetate + methanol + H(+). It carries out the reaction methyl salicylate + H2O = salicylate + methanol + H(+). It functions in the pathway plant hormone biosynthesis. Its activity is regulated as follows. Esterase activity is down-regulated by salicylic acid (SA). Functionally, methylesterase shown to have carboxylesterase activity, methyl indole-3-acetic acid (MeIAA) esterase activity and methyl salicylate (MeSA) esterase activity in vitro. Required to convert methyl salicylate (MeSA) to salicylic acid (SA) as part of the signal transduction pathways that activate systemic acquired resistance in systemic tissue. MeSA is believed to be an inactive form that needs to be demethylated to exert a biological effect. In Arabidopsis thaliana (Mouse-ear cress), this protein is Methylesterase 7.